The chain runs to 264 residues: Proliferating cell nuclear antigen (264 aa).

Residues 61–80 (RCDRNISMGMNLANMAKMLK) mediate DNA binding.

This sequence belongs to the PCNA family.

The protein resides in the nucleus. In terms of biological role, this protein is an auxiliary protein of DNA polymerase delta and is involved in the control of eukaryotic DNA replication by increasing the polymerase's processibility during elongation of the leading strand. In Nicotiana tabacum (Common tobacco), this protein is Proliferating cell nuclear antigen (PCNA).